Reading from the N-terminus, the 182-residue chain is Neuropeptide CCHamide-1 (182 aa).

A signal peptide spans 1–22; the sequence is MWYSKCSWTLVVLVALFALVTG. Residues Cys24 and Cys31 are joined by a disulfide bond. Position 35 is a histidine amide (His35). Positions 39 to 182 are excised as a propeptide; the sequence is SGGKAVIDAK…ENYSGYELTK (144 aa). Disordered regions lie at residues 67-103 and 133-154; these read NNNN…AAPA and QLQD…DAAA. A compositionally biased stretch (low complexity) spans 87 to 103; sequence RNTNANSANNIPLAAPA. Residue Asn174 is glycosylated (N-linked (GlcNAc...) asparagine).

In terms of tissue distribution, expressed in endocrine cells of the larval midgut (at protein level). In the brain, expressed in the optic lobes, lateral protocerebrum, subesophageal ganglion, and intermediate and superior medial protocerebrum (at protein level). Expressed in DN1a neurons but not in other clock neurons and expression follows a rhythmic pattern controlled by the circadian clock (at protein level). In the posterior midgut, expressed in enteroendocrine cells (at protein level). Low levels in larval brain with higher levels in larval and adult gut and adult brain.

The protein resides in the secreted. In terms of biological role, neuropeptide ligand for the CCHamide-1 receptor CCHa1-R. Neuromessenger mediating signaling between neuronal cells of the circadian clock network involved in regulation of sleep latency (the time required to fall asleep), amount of sleep and depth of sleep (arousability). Together with PDF, involved in regulating intensity and periodicity of daytime activity. In subsets of clock neurons modulates the rhythmic expression of PDP1 and PDF, and together with PDF modulates the rhythmic expression of circadian protein PER/period, but not TIM/timeless. Mediates signaling from DN1a (anterior dorsal neurons 1) clock neurons to s-LNv (small ventral lateral neurons) clock neurons through CCHa1-R, contributing to regulation of activity rhythms by the circadian clock, particularly in the morning. May be involved in signaling between clock neurons and non-clock neurons, such as the fan-shaped body, involved in sleep homeostasis. In response to a high protein diet mediates hormonal signaling between the gut and a CCHa1-R expressing subset of dopaminergic cells in the protocerebral anterior medial (PAM) cluster of the brain. This suppresses arousability by mechano-sensory stimulation (but not thermal stimulation) but is not involved in regulation of sleep patterns. The polypeptide is Neuropeptide CCHamide-1 (Drosophila melanogaster (Fruit fly)).